The following is a 174-amino-acid chain: ATP-dependent protease subunit HslV (174 aa).

Threonine 4 is an active-site residue. Alanine 159, cysteine 162, and threonine 165 together coordinate Na(+).

It belongs to the peptidase T1B family. HslV subfamily. In terms of assembly, a double ring-shaped homohexamer of HslV is capped on each side by a ring-shaped HslU homohexamer. The assembly of the HslU/HslV complex is dependent on binding of ATP.

The protein localises to the cytoplasm. The enzyme catalyses ATP-dependent cleavage of peptide bonds with broad specificity.. Its activity is regulated as follows. Allosterically activated by HslU binding. Its function is as follows. Protease subunit of a proteasome-like degradation complex believed to be a general protein degrading machinery. This is ATP-dependent protease subunit HslV from Moorella thermoacetica (strain ATCC 39073 / JCM 9320).